Here is a 322-residue protein sequence, read N- to C-terminus: MDPTISSHDTESTPLNETGHPNCTPILTLSFLVLITTLVGLAGNTIVLWLLGFRMRRKAISVYILNLALADSFFLCCHFIDSLLRIIDFYGLYAHKLSKDILGNAAIIPYISGLSILSAISTERCLCVLWPIWYHCHRPRNMSAIICALIWVLSFLMGILDWFSGFLGETHHHLWKNVDFIITAFLIFLFMLLSGSSLALLLRILCGPRRKPLSRLYVTIALTVMVYLICGLPLGLYLFLLYWFGVHLHYPFCHIYQVTAVLSCVNSSANPIIYFLVGSFRQHRKHRSLKRVLKRALEDTPEEDEYTDSHLHKTTEISESRY.

Residues 1–30 are Extracellular-facing; it reads MDPTISSHDTESTPLNETGHPNCTPILTLS. The N-linked (GlcNAc...) asparagine glycan is linked to Asn16. The helical transmembrane segment at 31–51 threads the bilayer; it reads FLVLITTLVGLAGNTIVLWLL. The Cytoplasmic portion of the chain corresponds to 52–59; that stretch reads GFRMRRKA. Residues 60-80 traverse the membrane as a helical segment; that stretch reads ISVYILNLALADSFFLCCHFI. The Extracellular portion of the chain corresponds to 81-100; sequence DSLLRIIDFYGLYAHKLSKD. Residues 101-121 form a helical membrane-spanning segment; that stretch reads ILGNAAIIPYISGLSILSAIS. Over 122 to 142 the chain is Cytoplasmic; the sequence is TERCLCVLWPIWYHCHRPRNM. The helical transmembrane segment at 143 to 163 threads the bilayer; the sequence is SAIICALIWVLSFLMGILDWF. Over 164-179 the chain is Extracellular; it reads SGFLGETHHHLWKNVD. Residues 180–200 form a helical membrane-spanning segment; sequence FIITAFLIFLFMLLSGSSLAL. Residues 201–223 are Cytoplasmic-facing; sequence LLRILCGPRRKPLSRLYVTIALT. Residues 224 to 244 form a helical membrane-spanning segment; the sequence is VMVYLICGLPLGLYLFLLYWF. The Extracellular segment spans residues 245 to 257; it reads GVHLHYPFCHIYQ. A helical transmembrane segment spans residues 258 to 278; the sequence is VTAVLSCVNSSANPIIYFLVG. Over 279–322 the chain is Cytoplasmic; that stretch reads SFRQHRKHRSLKRVLKRALEDTPEEDEYTDSHLHKTTEISESRY.

The protein belongs to the G-protein coupled receptor 1 family. Mas subfamily. In terms of tissue distribution, expressed in a subset of IB4-positive small diameter nociceptive dorsal root neurons.

It localises to the cell membrane. Functionally, orphan receptor activated by neuropeptides terminating in Arg-Phe or Arg-Phe-amide. Mediates its action by association with G proteins that activate a phosphatidylinositol-calcium second messenger system. Its effect is mediated by G(q) and G(11) proteins. May regulate the function of nociceptive neurons by modulation of pain perception. In Mus musculus (Mouse), this protein is Mas-related G-protein coupled receptor member X1.